Here is a 352-residue protein sequence, read N- to C-terminus: DNA polymerase IV (352 aa).

The region spanning 6 to 186 (IIHIDMDAFY…LPLGKIPGAG (181 aa)) is the UmuC domain. Mg(2+)-binding residues include Asp10 and Asp104. Glu105 is an active-site residue.

Belongs to the DNA polymerase type-Y family. Monomer. The cofactor is Mg(2+).

It localises to the cytoplasm. The catalysed reaction is DNA(n) + a 2'-deoxyribonucleoside 5'-triphosphate = DNA(n+1) + diphosphate. Poorly processive, error-prone DNA polymerase involved in untargeted mutagenesis. Copies undamaged DNA at stalled replication forks, which arise in vivo from mismatched or misaligned primer ends. These misaligned primers can be extended by PolIV. Exhibits no 3'-5' exonuclease (proofreading) activity. May be involved in translesional synthesis, in conjunction with the beta clamp from PolIII. This is DNA polymerase IV from Neisseria gonorrhoeae (strain ATCC 700825 / FA 1090).